Reading from the N-terminus, the 145-residue chain is uncharacterized protein (145 aa).

A signal peptide spans 1 to 23 (MSSSNLSSRKTRISAHFLDAAPA). The chain crosses the membrane as a helical span at residues 123-140 (VLLLIIALVFLLFVAIFI).

It is found in the membrane. This is an uncharacterized protein from Archaeoglobus fulgidus (strain ATCC 49558 / DSM 4304 / JCM 9628 / NBRC 100126 / VC-16).